The following is a 472-amino-acid chain: Acetyl-CoA decarbonylase/synthase complex subunit beta 2 (472 aa).

4 residues coordinate [Ni-Fe-S] cluster: Cys-189, Cys-192, Cys-278, and Cys-280.

Belongs to the CdhC family. As to quaternary structure, monomer. The ACDS complex is made up of alpha, epsilon, beta, gamma and delta chains with a probable stoichiometry of (alpha(2)epsilon(2))(4)-beta(8)-(gamma(1)delta(1))(8) (Potential). [Ni-Fe-S] cluster serves as cofactor.

The enzyme catalyses Co(I)-[corrinoid Fe-S protein] + acetyl-CoA + H(+) = methyl-Co(III)-[corrinoid Fe-S protein] + CO + CoA. It participates in one-carbon metabolism; methanogenesis from acetate. Part of a complex that catalyzes the reversible cleavage of acetyl-CoA, allowing growth on acetate as sole source of carbon and energy. The alpha-epsilon complex generates CO from CO(2), while the beta subunit (this protein) combines the CO with CoA and a methyl group to form acetyl-CoA. The methyl group, which is incorporated into acetyl-CoA, is transferred to the beta subunit by a corrinoid iron-sulfur protein (the gamma-delta complex). This Methanosarcina thermophila protein is Acetyl-CoA decarbonylase/synthase complex subunit beta 2 (cdhC2).